The primary structure comprises 158 residues: NADH-quinone oxidoreductase subunit B (158 aa).

Residues C36, C37, C101, and C131 each coordinate [4Fe-4S] cluster.

The protein belongs to the complex I 20 kDa subunit family. As to quaternary structure, NDH-1 is composed of 14 different subunits. Subunits NuoB, C, D, E, F, and G constitute the peripheral sector of the complex. Requires [4Fe-4S] cluster as cofactor.

Its subcellular location is the cell inner membrane. The catalysed reaction is a quinone + NADH + 5 H(+)(in) = a quinol + NAD(+) + 4 H(+)(out). Its function is as follows. NDH-1 shuttles electrons from NADH, via FMN and iron-sulfur (Fe-S) centers, to quinones in the respiratory chain. The immediate electron acceptor for the enzyme in this species is believed to be ubiquinone. Couples the redox reaction to proton translocation (for every two electrons transferred, four hydrogen ions are translocated across the cytoplasmic membrane), and thus conserves the redox energy in a proton gradient. This is NADH-quinone oxidoreductase subunit B from Francisella philomiragia subsp. philomiragia (strain ATCC 25017 / CCUG 19701 / FSC 153 / O#319-036).